The chain runs to 306 residues: Dioxygenase FrzG (306 aa).

Fe cation-binding residues include His132, Asp134, and His216.

It belongs to the PhyH family. As to quaternary structure, homodimer. The cofactor is Fe cation.

It carries out the reaction (1S,4S)-4-[(4-methoxyphenyl)methyl]-2-methyl-2,5-diazaspiro[bicyclo[3.2.1]octane-6,1'-cyclohexan]-4'-one + 2-oxoglutarate + O2 = (2S)-3-(4-methoxyphenyl)-2-[(3S)-3-(methylamino)-8-oxo-1-azaspiro[4.5]decan-1-yl]propanal + succinate + CO2. It participates in secondary metabolite biosynthesis. In terms of biological role, dioxygenase; part of the gene cluster that mediates the biosynthesis of the alkaloid (-)-FR901483, a potent immunosuppressant that shows efficacy in animal models and a probable inhibitor of purine nucleotide biosynthesis by targeting phosphoribosylpyrophosphate amidotransferase (PPAT). Within the pathway, FrzG cleaves the C9-N10' bond to yield a conjugated iminium. FrzG is also able to catalyze the dehydrogenation between C7 and C8 which leads to a shunt product. The biosynthesis of (-)-FR901483 starts with the condensation of two L-tyrosines to yield (S,S)-dityrosyl-piperazine. This process occurs in 3 steps with the non-canonical nonribosomal peptide synthetase FrzA catalyzing the reduction of L-tyrosine into L-tyrosinal, the spontaneous condensation of 2 L-tyrosinal units, and the subsequent reduction by the NmrA-like family domain-containing oxidoreductase FrzB. The cytochrome P450 monooxygenase FrzC then performs coupling between N10 and C1' to morph the piperazine into a 1,4-diazabicyclo[3.2.1]octane spiro-fused to a 2,5-cyclohexadienone. The dienone portion is further reduced to cyclohexanone by the flavin-dependent reductase FrzD. The methyltranserases (MTs) FrzE and FrzF are then involved in the methylation at the C10' amine and the C4 phenolic oxygen, respectively. The order of the two MTs appear to be interchangeable. Cleavage of the C9-N10' bond by the dioxygenase FrzG then leads to formation of a conjugated iminium. In addition to the oxidation of C9, an additional dehydrogenation between C7 and C8 can occur to give a likely shunt product. The next biosynthetic step is the intramolecular aldol condensation catalyzed by the newly identified aldolase FrzH to yield an aza-tricyclic product with the formation of a C9-C3' bond. The short-chain dehydrogenase/reductase FrzI then produces dephospho-(-)-FR901483 that is phosphorylated at C4'-OH into (-)-FR901483 by the phosphotransferase FrzJ. The polypeptide is Dioxygenase FrzG (Cladobotryum sp).